A 111-amino-acid polypeptide reads, in one-letter code: Large ribosomal subunit protein P2w (111 aa).

Positions 63–111 are disordered; sequence ASVPSGGGVAVSAAPSSGGGGAAAPAEKKEAKKEEKEESDDDMGFSLFE. A compositionally biased stretch (basic and acidic residues) spans 88–98; the sequence is AEKKEAKKEEK. The residue at position 101 (Ser-101) is a Phosphoserine.

It belongs to the eukaryotic ribosomal protein P1/P2 family. As to quaternary structure, P1 and P2 exist as dimers at the large ribosomal subunit.

Plays an important role in the elongation step of protein synthesis. The protein is Large ribosomal subunit protein P2w (RPP2D) of Arabidopsis thaliana (Mouse-ear cress).